The sequence spans 448 residues: Glucose-6-phosphate isomerase (448 aa).

The active-site Proton donor is glutamate 288. Catalysis depends on residues histidine 309 and lysine 423.

The protein belongs to the GPI family.

It localises to the cytoplasm. The enzyme catalyses alpha-D-glucose 6-phosphate = beta-D-fructose 6-phosphate. It functions in the pathway carbohydrate biosynthesis; gluconeogenesis. It participates in carbohydrate degradation; glycolysis; D-glyceraldehyde 3-phosphate and glycerone phosphate from D-glucose: step 2/4. Functionally, catalyzes the reversible isomerization of glucose-6-phosphate to fructose-6-phosphate. The polypeptide is Glucose-6-phosphate isomerase (Fusobacterium nucleatum subsp. nucleatum (strain ATCC 25586 / DSM 15643 / BCRC 10681 / CIP 101130 / JCM 8532 / KCTC 2640 / LMG 13131 / VPI 4355)).